We begin with the raw amino-acid sequence, 674 residues long: ATP-dependent DNA helicase Hel308 (674 aa).

ATP contacts are provided by residues glutamine 27 and valine 44 to threonine 51. Positions isoleucine 31–aspartate 197 constitute a Helicase ATP-binding domain. Residues aspartate 142–histidine 145 carry the DEAH box motif. A Helicase C-terminal domain is found at serine 224–alanine 411.

It belongs to the helicase family. Hel308 subfamily. Monomer.

It catalyses the reaction Couples ATP hydrolysis with the unwinding of duplex DNA by translocating in the 3'-5' direction.. The catalysed reaction is ATP + H2O = ADP + phosphate + H(+). Functionally, DNA-dependent ATPase and 3'-5' DNA helicase that may be involved in repair of stalled replication forks. The protein is ATP-dependent DNA helicase Hel308 of Thermoplasma acidophilum (strain ATCC 25905 / DSM 1728 / JCM 9062 / NBRC 15155 / AMRC-C165).